Reading from the N-terminus, the 449-residue chain is SUPPRESSOR OF GAMMA RESPONSE 1 (449 aa).

An NAC domain is found at 58 to 211 (LPRGVKFDPS…DYVVSKIFYQ (154 aa)). Residues 167–217 (RGCKKIMVLYGGKAVKTNWVMHQYHLGIEEDEKEGDYVVSKIFYQQPQQLV) mediate DNA binding. The segment covering 324–336 (DDKEEQEKDRDNE) has biased composition (basic and acidic residues). The disordered stretch occupies residues 324-348 (DDKEEQEKDRDNENQGEEDPTWFDS).

Phosphorylated in a DNA stress-independent manner. Hyperphosphorylated on SQ motifs upon double-strand breaks, H(2)O(2) or zeocin treatments. Hyperphosphorylation is required for SOG1 function, and unlike constitutive phosphorylation, is ATM dependent. As to expression, expressed in shoot and root apical meristems, in lateral root primordia, in the vasculature of young leaves and in the root stele.

It localises to the nucleus. Its function is as follows. Transcription factor regulating the transcriptional activation response to gamma irradiation. Required for stem-cell death induced by UVB or by gamma irradiation. Not required for ATM activation, but participates in pathways governed by both ATM and ATR sensor kinases. Involved in DNA damage response (DDR) system that regulates cell cycle arrest. Functional homolog of animal p53. Regulates SMR5 and SMR7 transcription. Regulates DNA repair and cytokinin signaling separately and plays a key role in controlling lateral root formation under genotoxic stress. This Arabidopsis thaliana (Mouse-ear cress) protein is SUPPRESSOR OF GAMMA RESPONSE 1.